An 818-amino-acid chain; its full sequence is Sorting nexin-29 (818 aa).

One can recognise an RUN domain in the interval 36 to 180 (SDSDSRVTCL…ILFAINIDNK (145 aa)). Positions 267 to 299 (VSFDDDEEEQGTGDTLKKMPGTAESSEENSDRS) are disordered. Phosphoserine is present on residues serine 268, serine 291, serine 292, serine 330, serine 344, serine 447, and serine 452. Disordered stretches follow at residues 343–375 (KSID…PDRT) and 441–462 (RYRE…PSAS). The span at 445-462 (ASSPGQGSPLSSLLPSAS) shows a compositional bias: low complexity. The stretch at 467–547 (MTVHELRQAI…VLKVQLKKYV (81 aa)) forms a coiled coil. A Phosphoserine modification is found at serine 642. Threonine 644 carries the post-translational modification Phosphothreonine. 2 positions are modified to phosphoserine: serine 645 and serine 649. Positions 659 to 782 (ALINVWIPSV…PFFVDITPPG (124 aa)) constitute a PX domain. The disordered stretch occupies residues 781-818 (PGEPLNKSSRPKAVSRFPKLSRGHPREVRNVEPQSGDL).

The protein belongs to the sorting nexin family.

The chain is Sorting nexin-29 (Snx29) from Mus musculus (Mouse).